The primary structure comprises 901 residues: Schlafen family member 11 (901 aa).

Mg(2+) contacts are provided by Glu-209 and Glu-214. Residue Lys-216 is part of the active site. Residues His-285, Cys-287, Cys-321, and Cys-322 each contribute to the Zn(2+) site. 599–606 contributes to the ATP binding site; sequence GLPGSGKT.

The protein belongs to the Schlafen family. Subgroup III subfamily. As to quaternary structure, homodimer. Interacts with MCM3. Interacts with DHX9. Interacts with RPA1. Mg(2+) serves as cofactor. As to expression, exhibits a wider expression range in ovarian and colon adenocarcinoma than in their corresponding healthy tissues.

Its subcellular location is the nucleus. It localises to the chromosome. In terms of biological role, inhibitor of DNA replication that promotes cell death in response to DNA damage. Acts as a guardian of the genome by killing cells with defective replication. Persistently blocks stressed replication forks by opening chromatin across replication initiation sites at stressed replication forks, possibly leading to unwind DNA ahead of the MCM helicase and block fork progression, ultimately leading to cell death. Upon DNA damage, inhibits translation of ATR or ATM based on distinct codon usage without disrupting early DNA damage response signaling. Antiviral restriction factor with manganese-dependent type II tRNA endoribonuclease. A single tRNA molecule is bound and cleaved by the SLFN11 dimer. Specifically abrogates the production of retroviruses such as human immunodeficiency virus 1 (HIV-1) by acting as a specific inhibitor of the synthesis of retroviruses encoded proteins in a codon-usage-dependent manner. Impairs the replication of human cytomegalovirus (HCMV) and some Flaviviruses. Exploits the unique viral codon bias towards A/T nucleotides. Also acts as an interferon (IFN)-induced antiviral protein which acts as an inhibitor of retrovirus protein synthesis. The sequence is that of Schlafen family member 11 from Homo sapiens (Human).